The primary structure comprises 454 residues: NEDD8-activating enzyme E1 catalytic subunit (454 aa).

Ala2 is subject to N-acetylalanine. Position 56–80 (56–80) interacts with ATP; the sequence is GLGCELLKDLALSGFRNLEVIDMDR. The active-site Glycyl thioester intermediate is Cys215.

Belongs to the ubiquitin-activating E1 family. UBA3 subfamily. In terms of assembly, heterodimer of UBA3/ECR1 and AXR1. Interacts with NEDD8 and RCE1. As to expression, expressed in shoot, root and floral meristems, in vascular tissues of cotyledons and mature leaves, and in the stele of the root.

The protein localises to the nucleus. It carries out the reaction ATP + [NEDD8 protein] + [E1 NEDD8-activating enzyme]-L-cysteine = AMP + diphosphate + [E1 NEDD8-activating enzyme]-S-[NEDD8 protein]-yl-L-cysteine.. It functions in the pathway protein modification; protein neddylation. Its function is as follows. Catalytic subunit of the dimeric ECR1-AXR1 E1 enzyme. E1 activates NEDD8/RUB1 by first adenylating its C-terminal glycine residue with ATP, thereafter linking this residue to the side chain of the catalytic cysteine, yielding a NEDD8-ECR1 thioester and free AMP. E1 finally transfers NEDD8 to the catalytic cysteine of RCE1. This chain is NEDD8-activating enzyme E1 catalytic subunit (ECR1), found in Arabidopsis thaliana (Mouse-ear cress).